Reading from the N-terminus, the 248-residue chain is Aspartate/glutamate leucyltransferase (248 aa).

The protein belongs to the R-transferase family. Bpt subfamily.

It is found in the cytoplasm. It carries out the reaction N-terminal L-glutamyl-[protein] + L-leucyl-tRNA(Leu) = N-terminal L-leucyl-L-glutamyl-[protein] + tRNA(Leu) + H(+). The catalysed reaction is N-terminal L-aspartyl-[protein] + L-leucyl-tRNA(Leu) = N-terminal L-leucyl-L-aspartyl-[protein] + tRNA(Leu) + H(+). Functionally, functions in the N-end rule pathway of protein degradation where it conjugates Leu from its aminoacyl-tRNA to the N-termini of proteins containing an N-terminal aspartate or glutamate. The chain is Aspartate/glutamate leucyltransferase from Methylorubrum populi (strain ATCC BAA-705 / NCIMB 13946 / BJ001) (Methylobacterium populi).